A 306-amino-acid chain; its full sequence is 33 kDa chaperonin (306 aa).

2 cysteine pairs are disulfide-bonded: Cys242–Cys244 and Cys275–Cys278.

Belongs to the HSP33 family. In terms of processing, under oxidizing conditions two disulfide bonds are formed involving the reactive cysteines. Under reducing conditions zinc is bound to the reactive cysteines and the protein is inactive.

The protein resides in the cytoplasm. Redox regulated molecular chaperone. Protects both thermally unfolding and oxidatively damaged proteins from irreversible aggregation. Plays an important role in the bacterial defense system toward oxidative stress. The chain is 33 kDa chaperonin from Gloeobacter violaceus (strain ATCC 29082 / PCC 7421).